The chain runs to 295 residues: Cell shape-determining protein MreC (295 aa).

Positions 1 to 34 are cleaved as a signal peptide; sequence MPQFFLNKRLIILLISIIVLVALVGFSLRDRENA. A coiled-coil region spans residues 66–112; that stretch reads VVDLKNTYTENQHLKERLEELAQLESEVADLKKENKDLKESLDITDS. The tract at residues 276-295 is disordered; that stretch reads SAEAGTTDDDTTSSDTTGGQ.

This sequence belongs to the MreC family. In terms of assembly, homooligomer of 24 subunits, arranged as 12 dimers.

Functionally, involved in formation and maintenance of cell shape. The chain is Cell shape-determining protein MreC from Listeria monocytogenes serovar 1/2a (strain ATCC BAA-679 / EGD-e).